Consider the following 129-residue polypeptide: MSGGRRKEEPPQPQLANGALKVSVWSKVLRSDAAWEDKDEFLDVIYWFRQIIAVVLGVIWGVLPLRGFLGIAGFCVINAGVLYLYFSNYLQIDEEEYGGTWELTKEGFMTSFALFMVIWIIFYTAIHYD.

Residues 1–44 (MSGGRRKEEPPQPQLANGALKVSVWSKVLRSDAAWEDKDEFLDV) lie on the Cytoplasmic side of the membrane. Residues 45 to 65 (IYWFRQIIAVVLGVIWGVLPL) form a helical membrane-spanning segment. R66 is a topological domain (lumenal). The chain crosses the membrane as a helical span at residues 67–84 (GFLGIAGFCVINAGVLYL). At 85–103 (YFSNYLQIDEEEYGGTWEL) the chain is on the cytoplasmic side. Residues 104–127 (TKEGFMTSFALFMVIWIIFYTAIH) form a helical membrane-spanning segment. The Lumenal segment spans residues 128–129 (YD).

It belongs to the EMC6 family. As to quaternary structure, component of the GET- and EMC-like (GEL) complex, composed of RAB5IF/OPTI and TMCO1. The GEL complex is part of the multi-pass translocon (MPT) complex, composed of three subcomplexes, the GEL complex (composed of RAB5IF/OPTI and TMCO1), the BOS complex (composed of NCLN/Nicalin, NOMO1 and TMEM147) and the PAT complex (composed of WDR83OS/Asterix and CCDC47). The MPT complex associates with the SEC61 complex. Interacts with NDUFS3, NDUFA4, NDUFV1, NDUFA9 and NDUFS8 of the mitochondrial membrane respiratory chain NADH dehydrogenase (Complex I). Interacts with UQCRC2 of the ubiquinol-cytochrome c reductase complex (Complex III). Interacts with COX5A and COX7C of the cytochrome c oxidase complex (Complex IV).

The protein resides in the endoplasmic reticulum membrane. It localises to the mitochondrion inner membrane. In terms of biological role, component of the multi-pass translocon (MPT) complex that mediates insertion of multi-pass membrane proteins into the lipid bilayer of membranes. The MPT complex takes over after the SEC61 complex: following membrane insertion of the first few transmembrane segments of proteins by the SEC61 complex, the MPT complex occludes the lateral gate of the SEC61 complex to promote insertion of subsequent transmembrane regions. Within the MPT complex, the GEL subcomplex may mediate insertion of transmembrane regions into the membrane. In addition to its role in multi-pass membrane insertion, RAB5IF/OPTI also acts as an assembly factor for mitochondrial respiratory complexes. This Canis lupus familiaris (Dog) protein is GEL complex subunit OPTI (RAB5IF).